We begin with the raw amino-acid sequence, 417 residues long: RQSLRLLSDGNDSXDIRHLSRLLDNLGSVDQQFRQLRHSDSPAENDRMGDTRIAALETGSFKNTWQAIRPQLNLESGVFRHAVRLSLVVAAACTIVEALNLNLGYWILLTRLFVCQPNYTATKSRVYQRIAGTVLGVIVGSLVPYFTPSVETKLWIVIAGTTLFFMTRTYKYSFSTFFITIQALTSLSLAGLDVYAAMPVRIIDTIIGASLAWAAVSYLWPDWKYLTLERTAALAVCSSGTYLQKIAERLKTGETGDDIEYRITRRRAHEHTAALSSTLSDMSSEPAKFADTCNPALPCSKPATALTGYISALGHTAAKCTKNAAPTLPHSSTLPPNTPPTSSNTCPTWDPTTFRRHWIHCAANSAPSAPAAAEHKATSSSNSSNSSPGSSNPTTAPTDKFRTGSPKTQPEKISAFW.

A run of 4 helical transmembrane segments spans residues 87–107 (LVVA…GYWI), 130–150 (IAGT…TPSV), 177–197 (FFIT…VYAA), and 202–222 (IIDT…LWPD). Over residues 366–398 (APSAPAAAEHKATSSSNSSNSSPGSSNPTTAPT) the composition is skewed to low complexity. Positions 366 to 417 (APSAPAAAEHKATSSSNSSNSSPGSSNPTTAPTDKFRTGSPKTQPEKISAFW) are disordered.

Belongs to the YccS/YhfK family.

Its subcellular location is the cell membrane. This is an uncharacterized protein from Neisseria gonorrhoeae.